The primary structure comprises 629 residues: Putrebactin synthase (629 aa).

It belongs to the IucA/IucC family. As to quaternary structure, homodimer.

The enzyme catalyses 2 N-(3-carboxypropanoyl)-N-hydroxyputrescine + 2 ATP = putrebactin + 2 AMP + 2 diphosphate + 2 H(+). It catalyses the reaction 2 N-(3-carboxypropanoyl)-N-hydroxyputrescine + ATP = pre-putrebactin + AMP + diphosphate + H(+). The catalysed reaction is pre-putrebactin + ATP = putrebactin + AMP + diphosphate + H(+). The protein operates within siderophore biosynthesis. Its activity is regulated as follows. Requires Mg(2+) for activity. Its function is as follows. Ligase involved in the biosynthesis of the siderophore putrebactin. Catalyzes the ATP-dependent head-to-tail dimerization of N-hydroxy-N-succinyl-putrescine (HSP) to give pre-putrebactin and subsequent macrocyclization of pre-putrebactin to give putrebactin. In Shewanella sp. (strain MR-4), this protein is Putrebactin synthase.